Here is a 611-residue protein sequence, read N- to C-terminus: Immunoglobulin superfamily member 8 (611 aa).

Positions 1 to 25 (MGVPSPTPLSSLLLLLLILGTRCYA) are cleaved as a signal peptide. Ig-like C2-type domains follow at residues 26–143 (RQVH…AKVE), 160–284 (PRGR…WVQV), 301–422 (SQLA…EAAS), and 429–554 (PVHV…ADYS). At 26–577 (RQVHVPRGPL…VYPYTHAVDT (552 aa)) the chain is on the extracellular side. Cys-47 and Cys-125 are disulfide-bonded. Residues Asn-48 and Asn-137 are each glycosylated (N-linked (GlcNAc...) asparagine). Cys-184 and Cys-268 form a disulfide bridge. Residues 272-274 (EWI) carry the EWI motif motif. Cystine bridges form between Cys-324–Cys-404 and Cys-460–Cys-542. N-linked (GlcNAc...) asparagine glycosylation is present at Asn-325. Phosphoserine is present on Ser-516. The helical transmembrane segment at 578–598 (LFVPLLVGTGVALVTGASVLA) threads the bilayer. Residues 599–611 (TITCCFMKRMRKR) are Cytoplasmic-facing. Residues Cys-602 and Cys-603 are each lipidated (S-palmitoyl cysteine).

Interacts directly with CD82 and CD9/tetraspanin-29. Also interacts with integrin alpha-3/beta-1 and integrin alpha-4/beta-1. Part of a complex composed of CD9, PTGFRN and CD81. Interacts with CD81/tetraspanin-28. Expressed in lymphocytes as well as in many tissues with higher expression in brain. Detected in all regions of the brain with weak expression in the pituitary. Expressed selectively by neurons but not by glial cells. Expressed in myoblasts (at protein level).

It localises to the cell membrane. Member of the immunoglobulin superfamily (IgSF) that links tetraspanin-enriched microdomains to the actin cytoskeleton and plays several important roles in innate and adaptive immunity. Acts as an inducible receptor of HSPA8 on dendritic cells to enhance the CCL21/SLC-dependent migration of activated mature dendritic cells while attenuating their antigen-specific stimulatory capacities. In complex with alpha-actinins ACTN1 and ACTN4, regulates actin dynamics in the immune synapse and subsequent T-cell activation. Inhibits the entry of several viruses such as hepatitis C Virus (HCV) or HIV-1. Mechanistically, promotes a change in CD81 organization at the plasma membrane by significantly restricting its diffusion which in turn influences CD81 interaction with Claudin-1/CLDN1, preventing CLDN1 from acting as a co-receptor required for HCV entry. Accumulates at the presynaptic terminal, the producer cell side of the virological synapse, to prevent HIV-1 Env-mediated cell-cell fusion. Highly expressed on malignant cells with antigen presentation defects, interacts with NK receptor KLRA9 to suppress NK-cell cytotoxicity. May participate in the regulation of neurite outgrowth and maintenance of the neural network in the adult brain. This Mus musculus (Mouse) protein is Immunoglobulin superfamily member 8 (Igsf8).